Consider the following 439-residue polypeptide: Chitinase-like protein Idgf1 (439 aa).

Residues 1-20 form the signal peptide; sequence MRFQLFYILGLLSVTSLTHA. Residues 22–439 enclose the GH18 domain; the sequence is SNLICYYDSN…ILRSIKYFMG (418 aa). Cysteine 26 and cysteine 53 are joined by a disulfide. Residues asparagine 122, asparagine 218, and asparagine 346 are each glycosylated (N-linked (GlcNAc...) asparagine). A disulfide bridge links cysteine 340 with cysteine 423.

Belongs to the glycosyl hydrolase 18 family. IDGF subfamily. As to expression, primarily expressed in yolk cells and fat body. In larvae, it is expressed in large salivary gland cells and weakly expressed in imaginal disks. Less expressed than Idgf2 and Idgf4.

It is found in the secreted. Cooperates with insulin-like peptides to stimulate the proliferation, polarization and motility of imaginal disk cells. May act by stabilizing the binding of insulin-like peptides to its receptor through a simultaneous interaction with both molecules to form a multiprotein signaling complex. The polypeptide is Chitinase-like protein Idgf1 (Idgf1) (Drosophila melanogaster (Fruit fly)).